An 80-amino-acid polypeptide reads, in one-letter code: Putative ankyrin repeat protein RC0877 (80 aa).

An ANK repeat occupies 6 to 46 (SGGIPLHAVAKNVRCTSKDIKDYEIYKLLVSYGADINARVE).

The protein is Putative ankyrin repeat protein RC0877 of Rickettsia conorii (strain ATCC VR-613 / Malish 7).